The following is a 464-amino-acid chain: ATP synthase subunit beta (464 aa).

Residue Gly-153–Thr-160 coordinates ATP.

It belongs to the ATPase alpha/beta chains family. As to quaternary structure, F-type ATPases have 2 components, CF(1) - the catalytic core - and CF(0) - the membrane proton channel. CF(1) has five subunits: alpha(3), beta(3), gamma(1), delta(1), epsilon(1). CF(0) has three main subunits: a(1), b(2) and c(9-12). The alpha and beta chains form an alternating ring which encloses part of the gamma chain. CF(1) is attached to CF(0) by a central stalk formed by the gamma and epsilon chains, while a peripheral stalk is formed by the delta and b chains.

The protein localises to the cell membrane. It carries out the reaction ATP + H2O + 4 H(+)(in) = ADP + phosphate + 5 H(+)(out). Functionally, produces ATP from ADP in the presence of a proton gradient across the membrane. The catalytic sites are hosted primarily by the beta subunits. The sequence is that of ATP synthase subunit beta from Alkaliphilus metalliredigens (strain QYMF).